A 426-amino-acid chain; its full sequence is D-tagatose-1,6-bisphosphate aldolase subunit KbaZ (426 aa).

The protein belongs to the GatZ/KbaZ family. KbaZ subfamily. Forms a complex with KbaY.

The protein operates within carbohydrate metabolism; D-tagatose 6-phosphate degradation; D-glyceraldehyde 3-phosphate and glycerone phosphate from D-tagatose 6-phosphate: step 2/2. In terms of biological role, component of the tagatose-1,6-bisphosphate aldolase KbaYZ that is required for full activity and stability of the Y subunit. Could have a chaperone-like function for the proper and stable folding of KbaY. When expressed alone, KbaZ does not show any aldolase activity. This chain is D-tagatose-1,6-bisphosphate aldolase subunit KbaZ, found in Escherichia coli (strain 55989 / EAEC).